A 533-amino-acid chain; its full sequence is Tyrosine/DOPA decarboxylase 3 (533 aa).

Position 319 is an N6-(pyridoxal phosphate)lysine (K319).

This sequence belongs to the group II decarboxylase family. As to quaternary structure, homodimer. The cofactor is pyridoxal 5'-phosphate. Roots.

The enzyme catalyses L-tyrosine + H(+) = tyramine + CO2. It carries out the reaction L-dopa + H(+) = dopamine + CO2. The catalysed reaction is 5-hydroxy-L-tryptophan + H(+) = serotonin + CO2. Functionally, marginally higher substrate specificity for L-DOPA over L-tyrosine. This Papaver somniferum (Opium poppy) protein is Tyrosine/DOPA decarboxylase 3 (TYDC3).